Consider the following 37-residue polypeptide: ATP synthase subunit O, mitochondrial (37 aa).

This sequence belongs to the ATPase delta chain family. As to quaternary structure, F-type ATPases have 2 components, CF(1) - the catalytic core - and CF(0) - the membrane proton channel. CF(1) has five subunits: alpha(3), beta(3), gamma(1), delta(1), epsilon(1). CF(0) has three main subunits: a, b and c.

It is found in the mitochondrion. Its subcellular location is the mitochondrion inner membrane. In terms of biological role, mitochondrial membrane ATP synthase (F(1)F(0) ATP synthase or Complex V) produces ATP from ADP in the presence of a proton gradient across the membrane which is generated by electron transport complexes of the respiratory chain. F-type ATPases consist of two structural domains, F(1) - containing the extramembraneous catalytic core and F(0) - containing the membrane proton channel, linked together by a central stalk and a peripheral stalk. During catalysis, ATP synthesis in the catalytic domain of F(1) is coupled via a rotary mechanism of the central stalk subunits to proton translocation. Part of the complex F(0) domain and the peripheric stalk, which acts as a stator to hold the catalytic alpha(3)beta(3) subcomplex and subunit a/ATP6 static relative to the rotary elements. The sequence is that of ATP synthase subunit O, mitochondrial from Solanum tuberosum (Potato).